We begin with the raw amino-acid sequence, 563 residues long: Kdo(2)-lipid A phosphoethanolamine 7''-transferase (563 aa).

At 1-9 the chain is on the cytoplasmic side; that stretch reads MRYIKSITQ. Residues 10 to 30 traverse the membrane as a helical segment; the sequence is QKLSFLLAIYIGLFMNGAVFY. Over 31–48 the chain is Periplasmic; the sequence is RRFGSYAHDFTVWKGISA. A helical membrane pass occupies residues 49–69; sequence VVELAATVLVTFFLLRLLSLF. Residues 70–79 are Cytoplasmic-facing; sequence GRRSWRILAS. The chain crosses the membrane as a helical span at residues 80-100; sequence LVVLFSAGASYYMTFLNVVIG. Over 101–117 the chain is Periplasmic; that stretch reads YGIIASVMTTDIDLSKE. The chain crosses the membrane as a helical span at residues 118–138; it reads VVGLNFILWLIAVSALPLILI. Topologically, residues 139-159 are cytoplasmic; the sequence is WNNRCRYTLLRQLRTPGQRIR. The helical transmembrane segment at 160–180 threads the bilayer; the sequence is SLAVVVLAGIMVWAPIRLLDI. Topologically, residues 181–563 are periplasmic; sequence QQKKVERATG…IPQAKEAAAN (383 aa).

Belongs to the phosphoethanolamine transferase family. EptB subfamily. It depends on Ca(2+) as a cofactor.

Its subcellular location is the cell inner membrane. It carries out the reaction alpha-Kdo-(2-&gt;4)-alpha-Kdo-(2-&gt;6)-lipid A (E. coli) + a 1,2-diacyl-sn-glycero-3-phosphoethanolamine = 7-O-[2-aminoethoxy(hydroxy)phosphoryl]-alpha-Kdo-(2-&gt;4)-alpha-Kdo-(2-&gt;6)-lipid A + a 1,2-diacyl-sn-glycerol. The enzyme catalyses alpha-Kdo-(2-&gt;4)-alpha-Kdo-(2-&gt;6)-lipid IVA (E. coli) + a 1,2-diacyl-sn-glycero-3-phosphoethanolamine = 7-O-[2-aminoethoxy(hydroxy)phosphoryl]-alpha-Kdo-(2-&gt;4)-alpha-Kdo-(2-&gt;6)-lipid IVA (E. coli) + a 1,2-diacyl-sn-glycerol. With respect to regulation, inhibited by calcium concentrations higher than 1 mM. Functionally, catalyzes the addition of a phosphoethanolamine (pEtN) moiety to the outer 3-deoxy-D-manno-octulosonic acid (Kdo) residue of a Kdo(2)-lipid A. Phosphatidylethanolamines with one unsaturated acyl group function as pEtN donors and the reaction releases diacylglycerol. This is Kdo(2)-lipid A phosphoethanolamine 7''-transferase (eptB) from Escherichia coli (strain K12).